Consider the following 356-residue polypeptide: Ubiquitin-conjugating enzyme E2 variant 3 (356 aa).

Positions 1-83 are disordered; it reads MSDQPGTSRP…LEDLHNYHRE (83 aa). The segment covering 18 to 32 has biased composition (polar residues); it reads PTKTATRRRARPIAI. Basic and acidic residues predominate over residues 63–76; that stretch reads QPRKTVPKNVPLED. The UBC core domain occupies 169 to 324; sequence DIITEFMNRS…AREFVMKMAG (156 aa).

The protein belongs to the ubiquitin-conjugating enzyme family. As to quaternary structure, may interact with pmk-3. Expressed ubiquitously.

The protein resides in the nucleus. It localises to the cytoplasm. Its subcellular location is the cell projection. It is found in the dendrite. The protein localises to the axon. The protein resides in the cilium. Its function is as follows. Possible negative regulator of polyubiquitination. May modulate the activity of the p38 MAP kinase pnk-3. May have a role in axon termination and synaptic transmission at motor and mechanosensory neurons. Plays a role in intraflagellar transport in cilia and cilium length regulation. This is Ubiquitin-conjugating enzyme E2 variant 3 from Caenorhabditis elegans.